The chain runs to 239 residues: Gag polyprotein (239 aa).

Residues 124-141 (KGEEVGETTAQRDAKMAP) are compositionally biased toward basic and acidic residues. The tract at residues 124 to 144 (KGEEVGETTAQRDAKMAPEKM) is disordered. The PPXY motif motif lies at 172–175 (PPPY). The tract at residues 184 to 214 (LAGVGEQQGQGGDTPWGAEQPRAEPGHAGLA) is disordered.

Its subcellular location is the virion. This chain is Gag polyprotein (ev-1), found in Galliformes.